The primary structure comprises 329 residues: Ketol-acid reductoisomerase (NADP(+)) (329 aa).

Positions 2-181 (VQKYYESDAD…GATRAVVFET (180 aa)) constitute a KARI N-terminal Rossmann domain. NADP(+) contacts are provided by residues 25-28 (YGSQ), Arg-48, Ser-52, and 82-85 (DENQ). Residue His-107 is part of the active site. Gly-133 lines the NADP(+) pocket. In terms of domain architecture, KARI C-terminal knotted spans 182-327 (TFAEETETDL…AEIRGFMPQF (146 aa)). The Mg(2+) site is built by Asp-190, Glu-194, Glu-226, and Glu-230. Ser-251 is a substrate binding site.

It belongs to the ketol-acid reductoisomerase family. It depends on Mg(2+) as a cofactor.

The catalysed reaction is (2R)-2,3-dihydroxy-3-methylbutanoate + NADP(+) = (2S)-2-acetolactate + NADPH + H(+). The enzyme catalyses (2R,3R)-2,3-dihydroxy-3-methylpentanoate + NADP(+) = (S)-2-ethyl-2-hydroxy-3-oxobutanoate + NADPH + H(+). It functions in the pathway amino-acid biosynthesis; L-isoleucine biosynthesis; L-isoleucine from 2-oxobutanoate: step 2/4. The protein operates within amino-acid biosynthesis; L-valine biosynthesis; L-valine from pyruvate: step 2/4. Involved in the biosynthesis of branched-chain amino acids (BCAA). Catalyzes an alkyl-migration followed by a ketol-acid reduction of (S)-2-acetolactate (S2AL) to yield (R)-2,3-dihydroxy-isovalerate. In the isomerase reaction, S2AL is rearranged via a Mg-dependent methyl migration to produce 3-hydroxy-3-methyl-2-ketobutyrate (HMKB). In the reductase reaction, this 2-ketoacid undergoes a metal-dependent reduction by NADPH to yield (R)-2,3-dihydroxy-isovalerate. The chain is Ketol-acid reductoisomerase (NADP(+)) from Methanoculleus marisnigri (strain ATCC 35101 / DSM 1498 / JR1).